A 726-amino-acid polypeptide reads, in one-letter code: MMNQTVTEEAVRRLAEGTHHDPFQILGCHAVGKKWEVRVWLPTAESASVEGWHALTRVEGTSLFIASLTEKQKKALPLHFKVNWVEANGSEHTVVSPYTFLPQLGELDLHLYAEGRHWHVYDVLGAQVKEVDNISGVQFSVWAPAASRVSVVGDFNGWNGLRHPMRTNGQSGVWELFIPGMVSGDIYKFEIRNYQTDQLLVKTDPYAKAMEFRPQTGSIVYDSTFQWQDRDWLAARAHFDWQASPINIYEVHLGSWQRDHDGFFLNYKEIAQRLVEYVKWMGYTHIELLPISEHPLDESWGYQTTGYFSPTSRFGSPDDFRYFVNYCHENGIGVFLDWVPAHFPKDEFALARFDGTALYEHEDPRRGEHQDWGTYIFNYGRNEVRNFLIANALYWLKELHIDGLRVDAVASMLYLDYSRKDGDWLPNQYGGRENIEAIEFLKTLNAEVHAQCPGALMMAEESTSWPMVSRPTWMGGLGFSMKWNMGWMNDTLDFFQQDPIYRPYHHNQLTFSQMYAYSENFILPLSHDEVVHMKHALVSKMPGDTWQKMANMRLLMGYQTLNPGKKLLFMGGEFAQWQEWSESRGLDWYLCEQPANRGVQMLVRDLNLLYQTSPALYCHDFDQEGFEWIDCHDYEQSVLSFVRISEKESLICVFNFTPVPRYDYRIGLPETGIYEEVLNSDSELYGGGNVGNSGQLTTEDQRWMNRPCSTTLVLPPLAVVVLRKKS.

Asp407 serves as the catalytic Nucleophile. Glu460 functions as the Proton donor in the catalytic mechanism.

It belongs to the glycosyl hydrolase 13 family. GlgB subfamily. In terms of assembly, monomer.

It carries out the reaction Transfers a segment of a (1-&gt;4)-alpha-D-glucan chain to a primary hydroxy group in a similar glucan chain.. The protein operates within glycan biosynthesis; glycogen biosynthesis. In terms of biological role, catalyzes the formation of the alpha-1,6-glucosidic linkages in glycogen by scission of a 1,4-alpha-linked oligosaccharide from growing alpha-1,4-glucan chains and the subsequent attachment of the oligosaccharide to the alpha-1,6 position. The polypeptide is 1,4-alpha-glucan branching enzyme GlgB (Hydrogenovibrio crunogenus (strain DSM 25203 / XCL-2) (Thiomicrospira crunogena)).